The following is a 221-amino-acid chain: NEDD4 family-interacting protein 1 (221 aa).

The residue at position 2 (A2) is an N-acetylalanine. The interaction with UBE2L3 stretch occupies residues A2–P41. Residues A2–G116 are Cytoplasmic-facing. The tract at residues G18–S44 is disordered. 3 short sequence motifs (PPxY motif) span residues P39–Y42, P64–Y67, and P74–Y76. The interaction with ITCH stretch occupies residues Y42–Y76. Residues I117–F137 traverse the membrane as a helical segment. Over C138 to A143 the chain is Extracellular. A helical transmembrane segment spans residues A144–V164. Residues R165–G172 are Cytoplasmic-facing. The helical transmembrane segment at Y173–L193 threads the bilayer. Over R194–Y221 the chain is Extracellular.

Forms heterodimers with NDFIP2. Interacts with several E3 ubiquitin-protein ligases, including ITCH, NEDD4, NEDD4L and WWP2. The interaction with NEDD4, NEDD4L and ITCH leads to relocalization of these proteins to exosomes and eventually to exosomal secretion. Interacts with U2SURP. Interacts with SLC11A2/DMT1. Interacts with PTEN. May interact with phosphorylated EGFR. Interacts with BRAT1. Interacts with KCNH2. Interacts with MAVS. Part of a complex containing ITCH, NDFIP1 and MAP3K7. Interacts (via N-terminus) with UBE2L3; the interaction mediates recruitment of UBE2L3 to ITCH. Ubiquitinated by NEDD4; mono-, di- and polyubiquitinated forms are detected. Ubiquitination regulates its degradation. In terms of processing, undergoes transient tyrosine phosphorylation following EGF stimulation, most probably by catalyzed by SRC. Phosphorylation SRC is enhanced in the presence of NDFIP2 which may act as a scaffold to recruit SRC to NDFIP1. Highly expressed in embryonic and early postnatal cortex (at protein level). Widely expressed. Hardly detectable in resting T-cells; up-regulated in T-cells in response to activation.

The protein localises to the endosome membrane. Its subcellular location is the golgi apparatus membrane. It is found in the synapse. It localises to the synaptosome. The protein resides in the cell projection. The protein localises to the dendrite. Its subcellular location is the secreted. Its function is as follows. Activates HECT domain-containing E3 ubiquitin-protein ligases, including NEDD4 and ITCH, and consequently modulates the stability of their targets. As a result, controls many cellular processes. Prevents chronic T-helper cell-mediated inflammation by activating ITCH and thus controlling JUNB degradation. Promotes pancreatic beta cell death through degradation of JUNB and inhibition of the unfolded protein response, leading to reduction of insulin secretion. Restricts the production of pro-inflammatory cytokines in effector Th17 T-cells by promoting ITCH-mediated ubiquitination and degradation of RORC. Together with NDFIP2, limits the cytokine signaling and expansion of effector Th2 T-cells by promoting degradation of JAK1, probably by ITCH- and NEDD4L-mediated ubiquitination. Regulates peripheral T-cell tolerance to self and foreign antigens, forcing the exit of naive CD4+ T-cells from the cell cycle before they become effector T-cells. Negatively regulates RLR-mediated antiviral response by promoting SMURF1-mediated ubiquitination and subsequent degradation of MAVS. Negatively regulates KCNH2 potassium channel activity by decreasing its cell-surface expression and interfering with channel maturation through recruitment of NEDD4L to the Golgi apparatus where it mediates KCNH2 degradation. In cortical neurons, mediates the ubiquitination of the divalent metal transporter SLC11A2/DMT1 by NEDD4L, leading to its down-regulation and protection of the cells from cobalt and iron toxicity. Important for normal development of dendrites and dendritic spines in cortex. Enhances the ubiquitination of BRAT1 mediated by: NEDD4, NEDD4L and ITCH and is required for the nuclear localization of ubiquitinated BRAT1. Enhances the ITCH-mediated ubiquitination of MAP3K7 by recruiting E2 ubiquitin-conjugating enzyme UBE2L3 to ITCH. Modulates EGFR signaling through multiple pathways. In particular, may regulate the ratio of AKT1-to-MAPK8 signaling in response to EGF, acting on AKT1 probably through PTEN destabilization and on MAPK8 through ITCH-dependent MAP2K4 inactivation. As a result, may control cell growth rate. Inhibits cell proliferation by promoting PTEN nuclear localization and changing its signaling specificity. This is NEDD4 family-interacting protein 1 (Ndfip1) from Mus musculus (Mouse).